The primary structure comprises 315 residues: Apolipoprotein F (315 aa).

The N-terminal stretch at 1 to 24 is a signal peptide; sequence MHSLRLILMSIQLLCYLLLCPVDA. Positions 25–154 are excised as a propeptide; that stretch reads TSHGEATSVS…EQPGPKRAKR (130 aa).

This sequence belongs to the apolipoprotein F family. Liver.

It is found in the secreted. In terms of biological role, minor apolipoprotein that associates with LDL. Inhibits cholesteryl ester transfer protein (CETP) activity and appears to be an important regulator of cholesterol transport. Also associates to a lesser degree with VLDL, Apo-AI and Apo-AII. The sequence is that of Apolipoprotein F (Apof) from Mus musculus (Mouse).